The chain runs to 342 residues: Sesquiterpene synthase MBR_09977 (342 aa).

Residues D91 and D96 each contribute to the Mg(2+) site. Positions 91–96 match the DDXXXD motif motif; sequence DDLFVD. R184 serves as a coordination point for substrate. 3 residues coordinate Mg(2+): N230, S234, and E238.

The protein belongs to the terpene synthase family. It depends on Mg(2+) as a cofactor.

The catalysed reaction is (2E,6E)-farnesyl diphosphate + H2O = (+)-corvol ether B + diphosphate. It catalyses the reaction (2E,6E)-farnesyl diphosphate + H2O = (+)-corvol ether A + diphosphate. Terpene synthase that catalyzes the conversion of (2E,6E)-farnesyl diphosphate (FPP) into sesquiterpenes which are important for fungi-environment interactions. Produces a mixture consisting of 8 sesquiterpenes including corvol ethers A and B, as well as traces of epizonarene, gamma-cadinene, delta-cadinene, alpha-cadinene, alpha-cadinol, and an unidentified sesquiterpene. The major product is corvol ether A. The sequence is that of Sesquiterpene synthase MBR_09977 from Metarhizium brunneum (strain ARSEF 3297).